A 97-amino-acid polypeptide reads, in one-letter code: Nucleoid-associated protein HP_0035 (97 aa).

It belongs to the YbaB/EbfC family. Homodimer.

It localises to the cytoplasm. It is found in the nucleoid. Functionally, binds to DNA and alters its conformation. May be involved in regulation of gene expression, nucleoid organization and DNA protection. This is Nucleoid-associated protein HP_0035 from Helicobacter pylori (strain ATCC 700392 / 26695) (Campylobacter pylori).